We begin with the raw amino-acid sequence, 172 residues long: Adenine phosphoribosyltransferase (172 aa).

It belongs to the purine/pyrimidine phosphoribosyltransferase family. In terms of assembly, homodimer.

It localises to the cytoplasm. It carries out the reaction AMP + diphosphate = 5-phospho-alpha-D-ribose 1-diphosphate + adenine. The protein operates within purine metabolism; AMP biosynthesis via salvage pathway; AMP from adenine: step 1/1. In terms of biological role, catalyzes a salvage reaction resulting in the formation of AMP, that is energically less costly than de novo synthesis. This chain is Adenine phosphoribosyltransferase, found in Roseiflexus castenholzii (strain DSM 13941 / HLO8).